The sequence spans 239 residues: DnaA regulatory inactivator Hda (239 aa).

It belongs to the DnaA family. HdA subfamily. The active form seems to be an ADP-bound monomer. Forms the RIDA complex (regulatory inactivation of DnaA) of ATP-DnaA, ADP-Hda and the DNA-loaded beta sliding clamp (dnaN).

Its function is as follows. Mediates the interaction of DNA replication initiator protein DnaA with DNA polymerase subunit beta sliding clamp (dnaN). Stimulates hydrolysis of ATP-DnaA to ADP-DnaA, rendering DnaA inactive for reinitiation, a process called regulatory inhibition of DnaA or RIDA. The sequence is that of DnaA regulatory inactivator Hda from Yersinia enterocolitica serotype O:8 / biotype 1B (strain NCTC 13174 / 8081).